The chain runs to 269 residues: Microtubule-associated protein RP/EB family member 1 (269 aa).

One can recognise a Calponin-homology (CH) domain in the interval 14-116 (NLSRHDMLAW…FVQWFKKFFD (103 aa)). A disordered region spans residues 168–190 (RTAVSNKPPAQGISKKPATVGNG). In terms of domain architecture, EB1 C-terminal spans 186-256 (TVGNGDDESA…LYATDEGFVI (71 aa)).

Belongs to the MAPRE family.

The protein resides in the cytoplasm. The protein localises to the cytoskeleton. It is found in the microtubule organizing center. Its subcellular location is the centrosome. It localises to the golgi apparatus. The protein resides in the spindle. The protein localises to the spindle pole. Plus-end tracking protein (+TIP) that binds to the plus-end of microtubules and regulates the dynamics of the microtubule cytoskeleton. Promotes cytoplasmic microtubule nucleation and elongation. Involved in mitotic spindle positioning by stabilizing microtubules and promoting dynamic connection between astral microtubules and the cortex during mitotic chromosome segregation. This is Microtubule-associated protein RP/EB family member 1 (mapre1) from Xenopus tropicalis (Western clawed frog).